Consider the following 1222-residue polypeptide: ATP-dependent helicase/nuclease subunit A (1222 aa).

The region spanning 39–495 (QKRTAQQIEA…ILLKENFRSQ (457 aa)) is the UvrD-like helicase ATP-binding domain. 60–67 (ASAGSGKT) contacts ATP. The region spanning 524–810 (QLIAGSHAQT…NLMTIHKSKG (287 aa)) is the UvrD-like helicase C-terminal domain.

It belongs to the helicase family. AddA subfamily. Heterodimer of AddA and AddB/RexB. Requires Mg(2+) as cofactor.

It carries out the reaction Couples ATP hydrolysis with the unwinding of duplex DNA by translocating in the 3'-5' direction.. It catalyses the reaction ATP + H2O = ADP + phosphate + H(+). In terms of biological role, the heterodimer acts as both an ATP-dependent DNA helicase and an ATP-dependent, dual-direction single-stranded exonuclease. Recognizes the chi site generating a DNA molecule suitable for the initiation of homologous recombination. The AddA nuclease domain is required for chi fragment generation; this subunit has the helicase and 3' -&gt; 5' nuclease activities. The chain is ATP-dependent helicase/nuclease subunit A from Streptococcus pyogenes serotype M3 (strain ATCC BAA-595 / MGAS315).